The primary structure comprises 149 residues: Large-conductance mechanosensitive channel (149 aa).

2 helical membrane passes run 14 to 34 (VVDM…VNTL) and 85 to 105 (GLFI…YLLV).

It belongs to the MscL family. In terms of assembly, homopentamer.

It is found in the cell inner membrane. In terms of biological role, channel that opens in response to stretch forces in the membrane lipid bilayer. May participate in the regulation of osmotic pressure changes within the cell. This is Large-conductance mechanosensitive channel from Chlorobium phaeovibrioides (strain DSM 265 / 1930) (Prosthecochloris vibrioformis (strain DSM 265)).